Consider the following 461-residue polypeptide: Argininosuccinate lyase (461 aa).

The protein belongs to the lyase 1 family. Argininosuccinate lyase subfamily.

Its subcellular location is the cytoplasm. The catalysed reaction is 2-(N(omega)-L-arginino)succinate = fumarate + L-arginine. Its pathway is amino-acid biosynthesis; L-arginine biosynthesis; L-arginine from L-ornithine and carbamoyl phosphate: step 3/3. This is Argininosuccinate lyase from Desulfitobacterium hafniense (strain DSM 10664 / DCB-2).